The primary structure comprises 330 residues: Aspartate--ammonia ligase (330 aa).

Belongs to the class-II aminoacyl-tRNA synthetase family. AsnA subfamily.

The protein localises to the cytoplasm. The catalysed reaction is L-aspartate + NH4(+) + ATP = L-asparagine + AMP + diphosphate + H(+). The protein operates within amino-acid biosynthesis; L-asparagine biosynthesis; L-asparagine from L-aspartate (ammonia route): step 1/1. The sequence is that of Aspartate--ammonia ligase from Cronobacter sakazakii (strain ATCC BAA-894) (Enterobacter sakazakii).